The sequence spans 75 residues: U9-theraphotoxin-Cg1a (75 aa).

Residues 1–21 (MKTLVLFIIFGLAALFLLSSA) form the signal peptide. Residues 22 to 29 (NELEETER) constitute a propeptide that is removed on maturation. 3 disulfides stabilise this stretch: cysteine 31-cysteine 46, cysteine 38-cysteine 51, and cysteine 45-cysteine 58.

It belongs to the neurotoxin 10 (Hwtx-1) family. 43 (Jztx-49) subfamily. In terms of tissue distribution, expressed by the venom gland.

It is found in the secreted. Probable ion channel inhibitor. This chain is U9-theraphotoxin-Cg1a, found in Chilobrachys guangxiensis (Chinese earth tiger tarantula).